Here is a 173-residue protein sequence, read N- to C-terminus: Crossover junction endodeoxyribonuclease RuvC (173 aa).

Catalysis depends on residues Asp-8, Glu-67, and Asp-139. Residues Asp-8, Glu-67, and Asp-139 each coordinate Mg(2+).

This sequence belongs to the RuvC family. In terms of assembly, homodimer which binds Holliday junction (HJ) DNA. The HJ becomes 2-fold symmetrical on binding to RuvC with unstacked arms; it has a different conformation from HJ DNA in complex with RuvA. In the full resolvosome a probable DNA-RuvA(4)-RuvB(12)-RuvC(2) complex forms which resolves the HJ. Mg(2+) serves as cofactor.

It is found in the cytoplasm. The catalysed reaction is Endonucleolytic cleavage at a junction such as a reciprocal single-stranded crossover between two homologous DNA duplexes (Holliday junction).. In terms of biological role, the RuvA-RuvB-RuvC complex processes Holliday junction (HJ) DNA during genetic recombination and DNA repair. Endonuclease that resolves HJ intermediates. Cleaves cruciform DNA by making single-stranded nicks across the HJ at symmetrical positions within the homologous arms, yielding a 5'-phosphate and a 3'-hydroxyl group; requires a central core of homology in the junction. The consensus cleavage sequence is 5'-(A/T)TT(C/G)-3'. Cleavage occurs on the 3'-side of the TT dinucleotide at the point of strand exchange. HJ branch migration catalyzed by RuvA-RuvB allows RuvC to scan DNA until it finds its consensus sequence, where it cleaves and resolves the cruciform DNA. This Pseudoalteromonas atlantica (strain T6c / ATCC BAA-1087) protein is Crossover junction endodeoxyribonuclease RuvC.